A 216-amino-acid polypeptide reads, in one-letter code: Uracil phosphoribosyltransferase (216 aa).

Residues Arg29–Lys30 and Arg37 contribute to the CTP site. Lys30–Arg34 serves as a coordination point for GTP. A 5-phospho-alpha-D-ribose 1-diphosphate-binding site is contributed by Arg80. Glu87–Ala96 lines the CTP pocket. 5-phospho-alpha-D-ribose 1-diphosphate is bound by residues Arg105 and Asp140–Thr148. Residues Ile203 and Gly208 to Ala210 contribute to the uracil site. Asp209 contacts 5-phospho-alpha-D-ribose 1-diphosphate.

Belongs to the UPRTase family. As to quaternary structure, homotetramer. The cofactor is Mg(2+).

It carries out the reaction UMP + diphosphate = 5-phospho-alpha-D-ribose 1-diphosphate + uracil. It participates in pyrimidine metabolism; UMP biosynthesis via salvage pathway; UMP from uracil: step 1/1. With respect to regulation, allosterically activated by GTP. Inhibited by CTP and UMP in combination. Its function is as follows. Catalyzes the conversion of uracil and 5-phospho-alpha-D-ribose 1-diphosphate (PRPP) to UMP and diphosphate. The protein is Uracil phosphoribosyltransferase (upp) of Saccharolobus solfataricus (strain ATCC 35092 / DSM 1617 / JCM 11322 / P2) (Sulfolobus solfataricus).